The chain runs to 432 residues: Solute carrier family 35 member F5 (432 aa).

Positions 1-33 are cleaved as a signal peptide; sequence MFLPSTTNHSSAPLQKHLCLFCTFWALLFGSHG. At S116 the chain carries Phosphoserine. Helical transmembrane passes span 152 to 172, 177 to 197, 205 to 225, 236 to 256, 270 to 290, 304 to 324, 329 to 349, and 361 to 381; these read ISFF…EALS, AIVN…AAVF, FTLS…LVNL, TIGS…IVMI, MFFG…FFLL, VVLM…EFLW, FLTS…LSII, and WLFF…TLLC. One can recognise an EamA domain in the interval 161–225; sequence FLANLSYQEA…SIGGVVLVNL (65 aa).

The protein belongs to the SLC35F solute transporter family.

The protein localises to the membrane. Functionally, putative solute transporter. The polypeptide is Solute carrier family 35 member F5 (SLC35F5) (Macaca fascicularis (Crab-eating macaque)).